A 306-amino-acid chain; its full sequence is MAIKHFLQFKDFTREELEYVFERTSWIKNQFKSYQKYWPLSDRTLVMIFEKASTRTRLSFEAGMQQLGGSAIYLNTRDSQLGRGEPVEDAAQVISRMSDIVMIRTFEQEIIERFAANSRVPVINGLTNEYHPCQILADIYTYIEHRGCIQGKTVAWVGDANNMCNTWLQAAEVLDFKVHVSTPPAYEIQPELVGKINPARFKVFADPMDACRGADLVTTDVWTSMGFEAENEERIKAFADWCVDGDMMRVANPQAVFMHCLPAHRGEEVTAEVIDGPQSVVWDEAENRLHVQKALMEYLMLGRIQG.

Residues 53–56 (STRT), Gln80, Arg104, and 131–134 (HPCQ) contribute to the carbamoyl phosphate site. Residues Asn162, Asp220, and 224 to 225 (SM) contribute to the L-ornithine site. Carbamoyl phosphate contacts are provided by residues 260–261 (CL) and Arg288.

This sequence belongs to the aspartate/ornithine carbamoyltransferase superfamily. OTCase family.

It is found in the cytoplasm. The enzyme catalyses carbamoyl phosphate + L-ornithine = L-citrulline + phosphate + H(+). It participates in amino-acid biosynthesis; L-arginine biosynthesis; L-arginine from L-ornithine and carbamoyl phosphate: step 1/3. Reversibly catalyzes the transfer of the carbamoyl group from carbamoyl phosphate (CP) to the N(epsilon) atom of ornithine (ORN) to produce L-citrulline. This Dechloromonas aromatica (strain RCB) protein is Ornithine carbamoyltransferase.